Here is a 46-residue protein sequence, read N- to C-terminus: Endochitinase 2 (46 aa).

The protein belongs to the glycosyl hydrolase 19 family. Chitinase class I subfamily.

It catalyses the reaction Random endo-hydrolysis of N-acetyl-beta-D-glucosaminide (1-&gt;4)-beta-linkages in chitin and chitodextrins.. Defense against chitin-containing fungal and bacterial pathogens. This is Endochitinase 2 from Arachis hypogaea (Peanut).